The following is a 117-amino-acid chain: DNA-directed RNA polymerase subunit omega (117 aa).

This sequence belongs to the RNA polymerase subunit omega family. As to quaternary structure, the RNAP catalytic core consists of 2 alpha, 1 beta, 1 beta' and 1 omega subunit. When a sigma factor is associated with the core the holoenzyme is formed, which can initiate transcription.

It carries out the reaction RNA(n) + a ribonucleoside 5'-triphosphate = RNA(n+1) + diphosphate. Its function is as follows. Promotes RNA polymerase assembly. Latches the N- and C-terminal regions of the beta' subunit thereby facilitating its interaction with the beta and alpha subunits. The chain is DNA-directed RNA polymerase subunit omega from Roseobacter denitrificans (strain ATCC 33942 / OCh 114) (Erythrobacter sp. (strain OCh 114)).